The following is a 98-amino-acid chain: PsbF-like protein (98 aa).

Transmembrane regions (helical) follow at residues 5–25 (VLLV…WLGK) and 73–93 (TAAV…ILAM).

The protein belongs to the PsbE/PsbF family.

The protein resides in the membrane. Unknown. Resembles PsbF, one of the subunits of the photosystem II reaction center. However, it encodes asparagine rather than histidine at the site PsbF uses to bind heme. This chain is PsbF-like protein, found in Prochlorococcus marinus (strain MIT 9312).